The chain runs to 242 residues: Large ribosomal subunit protein uL30x (242 aa).

It belongs to the universal ribosomal protein uL30 family.

The chain is Large ribosomal subunit protein uL30x (RPL7C) from Arabidopsis thaliana (Mouse-ear cress).